The chain runs to 230 residues: 2,3-bisphosphoglycerate-dependent phosphoglycerate mutase (230 aa).

Residues 10 to 17, 23 to 24, Arg62, 89 to 92, Lys100, 116 to 117, and 185 to 186 each bind substrate; these read RHGQSKWN, TG, ERHY, RR, and GN. The active-site Tele-phosphohistidine intermediate is the His11. The active-site Proton donor/acceptor is Glu89.

It belongs to the phosphoglycerate mutase family. BPG-dependent PGAM subfamily. Homodimer.

The catalysed reaction is (2R)-2-phosphoglycerate = (2R)-3-phosphoglycerate. It participates in carbohydrate degradation; glycolysis; pyruvate from D-glyceraldehyde 3-phosphate: step 3/5. Functionally, catalyzes the interconversion of 2-phosphoglycerate and 3-phosphoglycerate. The polypeptide is 2,3-bisphosphoglycerate-dependent phosphoglycerate mutase (Buchnera aphidicola subsp. Schizaphis graminum (strain Sg)).